The following is a 496-amino-acid chain: Glycylpeptide N-tetradecanoyltransferase 1 (496 aa).

A disordered region spans residues 1-81 (MADESETAVK…DSTQDQPVKM (81 aa)). Ser-31 and Ser-47 each carry phosphoserine. Positions 55–66 (KKKKKKQKKKKE) are enriched in basic residues. Ser-83 is modified (phosphoserine). Tetradecanoyl-CoA contacts are provided by Gln-118, Phe-119, Trp-120, Phe-247, Leu-248, Cys-249, Val-250, Ser-256, Arg-258, Val-259, and Ala-260.

The protein belongs to the NMT family.

The protein localises to the cytoplasm. It is found in the cytosol. It localises to the membrane. The enzyme catalyses N-terminal glycyl-[protein] + tetradecanoyl-CoA = N-tetradecanoylglycyl-[protein] + CoA + H(+). It carries out the reaction N-terminal glycyl-L-lysyl-[protein] + tetradecanoyl-CoA = N-terminal glycyl-(N(6)-tetradecanoyl)-L-lysyl-[protein] + CoA + H(+). Its function is as follows. Adds a myristoyl group to the N-terminal glycine residue of certain cellular and viral proteins. Also able to mediate N-terminal lysine myristoylation of proteins: catalyzes myristoylation of ARF6 on both 'Gly-2' and 'Lys-3'. Lysine myristoylation is required to maintain ARF6 on membranes during the GTPase cycle. In Rattus norvegicus (Rat), this protein is Glycylpeptide N-tetradecanoyltransferase 1 (Nmt1).